A 176-amino-acid polypeptide reads, in one-letter code: Magnesium-dependent phosphatase 1 (176 aa).

Catalysis depends on aspartate 11, which acts as the Nucleophile. A Mg(2+)-binding site is contributed by aspartate 11. Positions 12 and 13 each coordinate phosphate. Aspartate 13 contacts Mg(2+). Catalysis depends on aspartate 13, which acts as the Proton donor. Tryptophan 20 is a binding site for substrate. 3 residues coordinate phosphate: serine 69, arginine 70, and lysine 100. Arginine 70 lines the substrate pocket. Mg(2+) is bound at residue aspartate 123.

It belongs to the HAD-like hydrolase superfamily. The cofactor is Mg(2+).

It catalyses the reaction O-phospho-L-tyrosyl-[protein] + H2O = L-tyrosyl-[protein] + phosphate. Inhibited by vanadate and zinc, and slightly by calcium. Functionally, magnesium-dependent phosphatase which may act as a tyrosine phosphatase. This chain is Magnesium-dependent phosphatase 1 (MDP1), found in Homo sapiens (Human).